A 406-amino-acid polypeptide reads, in one-letter code: UPF0754 membrane protein CYA_0973 (406 aa).

2 helical membrane passes run 1–21 and 385–405; these read MALWIYVVPPLAGLVIGYFTN and IVNLGGLLGFLVGCVQVLFLL.

Belongs to the UPF0754 family.

Its subcellular location is the cell inner membrane. This chain is UPF0754 membrane protein CYA_0973, found in Synechococcus sp. (strain JA-3-3Ab) (Cyanobacteria bacterium Yellowstone A-Prime).